Consider the following 92-residue polypeptide: RIIa domain-containing protein 1 (92 aa).

In terms of domain architecture, RIIa spans lysine 43–leucine 77.

The chain is RIIa domain-containing protein 1 (RIIAD1) from Homo sapiens (Human).